We begin with the raw amino-acid sequence, 130 residues long: Small ribosomal subunit protein uS9 (130 aa).

The protein belongs to the universal ribosomal protein uS9 family.

This chain is Small ribosomal subunit protein uS9, found in Yersinia enterocolitica serotype O:8 / biotype 1B (strain NCTC 13174 / 8081).